The following is a 369-amino-acid chain: Bi-functional coumaroyl CoA and feruloyl CoA ortho-hydroxylase Diox2 (369 aa).

One can recognise a Fe2OG dioxygenase domain in the interval 215 to 318 (GSRRVNLNYY…RISVPLFVNP (104 aa)). Residue Y224 participates in 2-oxoglutarate binding. Positions 239, 241, and 299 each coordinate Fe cation. 2-oxoglutarate is bound by residues R309 and S311.

It belongs to the iron/ascorbate-dependent oxidoreductase family. L-ascorbate is required as a cofactor. It depends on Fe(2+) as a cofactor.

It carries out the reaction (E)-4-coumaroyl-CoA + 2-oxoglutarate + O2 = (E)-2,4-dihydroxycinnamoyl-CoA + succinate + CO2. The enzyme catalyses (E)-feruloyl-CoA + 2-oxoglutarate + O2 = (E)-6-hydroxyferuloyl-CoA + succinate + CO2. It participates in phenylpropanoid metabolism. 2-oxoglutarate (OG)- and Fe(II)-dependent dioxygenase (2OGD) involved in scopoletin and umbelliferone biosynthesis. Converts feruloyl CoA into 6'-hydroxyferuloyl CoA, and p-coumaroyl CoA into 2,4-dihydroxycinnamoyl-CoA. This is Bi-functional coumaroyl CoA and feruloyl CoA ortho-hydroxylase Diox2 from Ruta graveolens (Common rue).